The chain runs to 120 residues: Small ribosomal subunit protein uS13 (120 aa).

Residues 93–120 form a disordered region; the sequence is GLPVRGQNTKNNARTRKGPRRTVANKKK. A compositionally biased stretch (basic residues) spans 105–120; sequence ARTRKGPRRTVANKKK.

This sequence belongs to the universal ribosomal protein uS13 family. As to quaternary structure, part of the 30S ribosomal subunit. Has been shown to cross-link to S19 forming a loose heterodimer. Forms two bridges to the 50S subunit in the 70S ribosome.

Its function is as follows. Located at the top of the head of the 30S subunit, it contacts several helices of the 16S rRNA. In the 70S ribosome it contacts the 23S rRNA (bridge B1a) and protein L5 of the 50S subunit (bridge B1b), connecting the 2 subunits; these bridges are implicated in subunit movement. Contacts the tRNA in the A and P-sites. This is Small ribosomal subunit protein uS13 (rpsM) from Geobacillus stearothermophilus (Bacillus stearothermophilus).